The following is a 437-amino-acid chain: Adenylosuccinate synthetase (437 aa).

Residues 12–18 and 40–42 each bind GTP; these read GDEGKGK and GHT. Asp13 acts as the Proton acceptor in catalysis. Mg(2+) contacts are provided by Asp13 and Gly40. IMP is bound by residues 13–16, 38–41, Thr131, Arg145, Gln226, Thr241, and Arg305; these read DEGK and NAGH. The active-site Proton donor is the His41. 301-307 provides a ligand contact to substrate; the sequence is ATTGRRR. Residues Arg307, 333–335, and 415–417 contribute to the GTP site; these read KLD and SVG.

Belongs to the adenylosuccinate synthetase family. In terms of assembly, homodimer. Requires Mg(2+) as cofactor.

Its subcellular location is the cytoplasm. It carries out the reaction IMP + L-aspartate + GTP = N(6)-(1,2-dicarboxyethyl)-AMP + GDP + phosphate + 2 H(+). Its pathway is purine metabolism; AMP biosynthesis via de novo pathway; AMP from IMP: step 1/2. Its function is as follows. Plays an important role in the de novo pathway of purine nucleotide biosynthesis. Catalyzes the first committed step in the biosynthesis of AMP from IMP. In Desulfotalea psychrophila (strain LSv54 / DSM 12343), this protein is Adenylosuccinate synthetase.